The sequence spans 276 residues: NAD kinase (276 aa).

Asp-61 (proton acceptor) is an active-site residue. NAD(+) is bound by residues Asp-61–Gly-62, Asn-134–Asp-135, Arg-145, Lys-162, Asp-164, Val-172, Thr-175–Ser-180, and Gln-234.

It belongs to the NAD kinase family. A divalent metal cation is required as a cofactor.

The protein localises to the cytoplasm. It catalyses the reaction NAD(+) + ATP = ADP + NADP(+) + H(+). Involved in the regulation of the intracellular balance of NAD and NADP, and is a key enzyme in the biosynthesis of NADP. Catalyzes specifically the phosphorylation on 2'-hydroxyl of the adenosine moiety of NAD to yield NADP. In Clostridium perfringens (strain ATCC 13124 / DSM 756 / JCM 1290 / NCIMB 6125 / NCTC 8237 / Type A), this protein is NAD kinase.